The sequence spans 316 residues: GTP cyclohydrolase FolE2 1 (316 aa).

Belongs to the GTP cyclohydrolase IV family.

It carries out the reaction GTP + H2O = 7,8-dihydroneopterin 3'-triphosphate + formate + H(+). It functions in the pathway cofactor biosynthesis; 7,8-dihydroneopterin triphosphate biosynthesis; 7,8-dihydroneopterin triphosphate from GTP: step 1/1. Converts GTP to 7,8-dihydroneopterin triphosphate. This chain is GTP cyclohydrolase FolE2 1, found in Burkholderia orbicola (strain AU 1054).